The primary structure comprises 163 residues: UPF0416 protein RBE_1121 (163 aa).

This sequence belongs to the UPF0416 family.

This Rickettsia bellii (strain RML369-C) protein is UPF0416 protein RBE_1121.